The following is a 261-amino-acid chain: Triosephosphate isomerase (261 aa).

10 to 12 lines the substrate pocket; that stretch reads NWK. Histidine 100 functions as the Electrophile in the catalytic mechanism. Glutamate 172 serves as the catalytic Proton acceptor. Residues glycine 178, serine 218, and 239–240 each bind substrate; that span reads GG.

This sequence belongs to the triosephosphate isomerase family. In terms of assembly, homodimer.

It localises to the cytoplasm. The catalysed reaction is D-glyceraldehyde 3-phosphate = dihydroxyacetone phosphate. Its pathway is carbohydrate biosynthesis; gluconeogenesis. It participates in carbohydrate degradation; glycolysis; D-glyceraldehyde 3-phosphate from glycerone phosphate: step 1/1. In terms of biological role, involved in the gluconeogenesis. Catalyzes stereospecifically the conversion of dihydroxyacetone phosphate (DHAP) to D-glyceraldehyde-3-phosphate (G3P). The protein is Triosephosphate isomerase of Mycobacterium sp. (strain JLS).